The chain runs to 160 residues: MPRKGRVPRREILPDAKYNSIIVHKLINKVMKDGKKSTAEYIVYTALERVAEKLNLSPVEVLEKALENVKPVWEVRPRRVGGATYQVPVEVEEHRRESLGIKWLVDAARERARHRGSYTMEERLAAEIMDAIENKGAAVKKKEDTHRMAEANKVFAHFKW.

The protein belongs to the universal ribosomal protein uS7 family. As to quaternary structure, part of the 30S ribosomal subunit. Contacts proteins S9 and S11.

One of the primary rRNA binding proteins, it binds directly to 16S rRNA where it nucleates assembly of the head domain of the 30S subunit. Is located at the subunit interface close to the decoding center, probably blocks exit of the E-site tRNA. In Hydrogenobaculum sp. (strain Y04AAS1), this protein is Small ribosomal subunit protein uS7.